Consider the following 290-residue polypeptide: Xylanase inhibitor protein 2 (290 aa).

The signal sequence occupies residues 1 to 27; the sequence is MGLVHALLPFAAAAALLLLAAPPPATA. The GH18 domain maps to 30-290; that stretch reads PGLAVYWGRH…DKKANYTGEG (261 aa). Cysteines 49 and 89 form a disulfide. Residue Asn-112 is glycosylated (N-linked (GlcNAc...) asparagine). An intrachain disulfide couples Cys-187 to Cys-216. The N-linked (GlcNAc...) asparagine glycan is linked to Asn-285.

It belongs to the glycosyl hydrolase 18 family. Xylanase inhibitor subfamily. As to quaternary structure, binds to fungal GH10 xylanases.

The protein resides in the secreted. In terms of biological role, fungal xylanase inhibitor. Possesses competitive inhibiting activity against several fungal endo-1,4-beta-D-xylanases belonging to glycoside hydrolase family 10 (GH10) and family 11 (GH11). May function in plant defense against secreted fungal pathogen xylanases. Is similar to class III chitinases, but does not exhibit chitinase activity. The polypeptide is Xylanase inhibitor protein 2 (Oryza sativa subsp. japonica (Rice)).